A 380-amino-acid polypeptide reads, in one-letter code: Cytochrome b (380 aa).

The next 4 helical transmembrane spans lie at 34 to 54 (FGSL…LLAM), 78 to 99 (WLIR…YLHI), 114 to 134 (WNIG…GYVL), and 179 to 199 (LFAL…VHLT). Histidine 84 and histidine 98 together coordinate heme b. Heme b contacts are provided by histidine 183 and histidine 197. A ubiquinone is bound at residue histidine 202. The next 4 membrane-spanning stretches (helical) occupy residues 227-247 (IKDL…ALFA), 289-309 (LGGV…PLLH), 321-341 (LSQM…WVGS), and 348-368 (FIII…VLFP).

Belongs to the cytochrome b family. The cytochrome bc1 complex contains 11 subunits: 3 respiratory subunits (MT-CYB, CYC1 and UQCRFS1), 2 core proteins (UQCRC1 and UQCRC2) and 6 low-molecular weight proteins (UQCRH/QCR6, UQCRB/QCR7, UQCRQ/QCR8, UQCR10/QCR9, UQCR11/QCR10 and a cleavage product of UQCRFS1). This cytochrome bc1 complex then forms a dimer. It depends on heme b as a cofactor.

The protein resides in the mitochondrion inner membrane. Functionally, component of the ubiquinol-cytochrome c reductase complex (complex III or cytochrome b-c1 complex) that is part of the mitochondrial respiratory chain. The b-c1 complex mediates electron transfer from ubiquinol to cytochrome c. Contributes to the generation of a proton gradient across the mitochondrial membrane that is then used for ATP synthesis. This Aphelocoma coerulescens (Florida scrub-jay) protein is Cytochrome b (MT-CYB).